Consider the following 140-residue polypeptide: UPF0299 membrane protein CGSHiGG_01475 (140 aa).

Transmembrane regions (helical) follow at residues 1-21 (MIQK…MLYL), 33-52 (VPGS…TRVI), 60-80 (GASL…VGII), and 92-112 (ILLV…GFLG).

It belongs to the UPF0299 family.

The protein resides in the cell inner membrane. The protein is UPF0299 membrane protein CGSHiGG_01475 of Haemophilus influenzae (strain PittGG).